The primary structure comprises 156 residues: Small ribosomal subunit protein uS7 (156 aa).

The protein belongs to the universal ribosomal protein uS7 family. Part of the 30S ribosomal subunit. Contacts proteins S9 and S11.

In terms of biological role, one of the primary rRNA binding proteins, it binds directly to 16S rRNA where it nucleates assembly of the head domain of the 30S subunit. Is located at the subunit interface close to the decoding center, probably blocks exit of the E-site tRNA. This is Small ribosomal subunit protein uS7 from Leuconostoc citreum (strain KM20).